The following is a 175-amino-acid chain: MMTYIVFILSIIFVMGFVGFSSKPSPIYGGLGLIVSGGVGCGIVLNFGGSFLGLMVFLIYLGGMMVVFGYTTAMATEQYPEVWVSNKVVLGTFITGLLMEFLMVYYVLKDKEVEIVFKFNGMGDWVIYDTGDSGFFSEEAMGIAALYSYGTWLVIVTGWSLLIGVVVIMEITRGN.

A run of 5 helical transmembrane segments spans residues 1-21 (MMTYIVFILSIIFVMGFVGFS), 25-45 (SPIYGGLGLIVSGGVGCGIVL), 47-67 (FGGSFLGLMVFLIYLGGMMVV), 88-108 (VVLGTFITGLLMEFLMVYYVL), and 149-169 (YGTWLVIVTGWSLLIGVVVIM).

Belongs to the complex I subunit 6 family. In terms of assembly, core subunit of respiratory chain NADH dehydrogenase (Complex I) which is composed of 45 different subunits.

The protein resides in the mitochondrion inner membrane. It catalyses the reaction a ubiquinone + NADH + 5 H(+)(in) = a ubiquinol + NAD(+) + 4 H(+)(out). In terms of biological role, core subunit of the mitochondrial membrane respiratory chain NADH dehydrogenase (Complex I) which catalyzes electron transfer from NADH through the respiratory chain, using ubiquinone as an electron acceptor. Essential for the catalytic activity and assembly of complex I. The chain is NADH-ubiquinone oxidoreductase chain 6 (MT-ND6) from Ovis aries (Sheep).